The primary structure comprises 196 residues: Gastrula zinc finger protein XlCGF8.2DB (196 aa).

7 consecutive C2H2-type zinc fingers follow at residues 6–28 (FTCK…MTIH), 34–56 (FSCT…LTIH), 62–84 (FPCT…MKIH), 90–112 (FTCT…LKIH), 118–140 (FSCT…MKIH), 146–168 (FTCT…LKMH), and 174–196 (FTCT…MKIH).

The protein belongs to the krueppel C2H2-type zinc-finger protein family.

Its subcellular location is the nucleus. May be involved in transcriptional regulation. This chain is Gastrula zinc finger protein XlCGF8.2DB, found in Xenopus laevis (African clawed frog).